The primary structure comprises 454 residues: MSKLSVVILAAGKGTRMYSDLPKVLHKVAGKPMVKHVIDTAKQLSAEQIHLIYGHGADLLKERLADEPVNWVFQAEQLGTGHAMQQAAPFFKDDENIVMLYGDAPLITKETLERLVAAKPENGIALLTVELENPTGYGRIIRENGSVVAIVEQKDATPEQLKITEVNTGVMVSDGASFKKWLARLDNDNAQGEYYMTDVIGLANQDGFKVAAVTADDMMEVEGANNRLQLAALERYFQRKQATALLLAGVSLADPERFDLRGELEHGKDVEIDVNVIIEGKVKLGNGVKIGAGCVLKNAIIGDNTEIKPYSVLEDSSVGEQAAIGPFSRLRPGAELAAETHVGNFVEIKKAVVGKGTKVNHLTYVGDAEIGSGCNIGAGVITCNYDGANKFKTLIGDNVFVGSDVQLVAPVKVNNGATIGAGSTITKDVAAGELVTTRVPQRHTADWERPSKKK.

Residues 1 to 227 (MSKLSVVILA…MMEVEGANNR (227 aa)) form a pyrophosphorylase region. UDP-N-acetyl-alpha-D-glucosamine contacts are provided by residues 9–12 (LAAG), Lys-23, Gln-74, 79–80 (GT), 101–103 (YGD), Gly-138, Glu-152, Asn-167, and Asn-225. Asp-103 serves as a coordination point for Mg(2+). Position 225 (Asn-225) interacts with Mg(2+). The segment at 228-248 (LQLAALERYFQRKQATALLLA) is linker. The segment at 249 to 454 (GVSLADPERF…ADWERPSKKK (206 aa)) is N-acetyltransferase. Residues Arg-331 and Lys-349 each contribute to the UDP-N-acetyl-alpha-D-glucosamine site. His-361 serves as the catalytic Proton acceptor. Tyr-364 and Asn-375 together coordinate UDP-N-acetyl-alpha-D-glucosamine. Residues Ala-378, 384–385 (NY), Ser-403, Ala-421, and Arg-438 contribute to the acetyl-CoA site.

This sequence in the N-terminal section; belongs to the N-acetylglucosamine-1-phosphate uridyltransferase family. In the C-terminal section; belongs to the transferase hexapeptide repeat family. Homotrimer. Mg(2+) is required as a cofactor.

It is found in the cytoplasm. It carries out the reaction alpha-D-glucosamine 1-phosphate + acetyl-CoA = N-acetyl-alpha-D-glucosamine 1-phosphate + CoA + H(+). The enzyme catalyses N-acetyl-alpha-D-glucosamine 1-phosphate + UTP + H(+) = UDP-N-acetyl-alpha-D-glucosamine + diphosphate. It functions in the pathway nucleotide-sugar biosynthesis; UDP-N-acetyl-alpha-D-glucosamine biosynthesis; N-acetyl-alpha-D-glucosamine 1-phosphate from alpha-D-glucosamine 6-phosphate (route II): step 2/2. Its pathway is nucleotide-sugar biosynthesis; UDP-N-acetyl-alpha-D-glucosamine biosynthesis; UDP-N-acetyl-alpha-D-glucosamine from N-acetyl-alpha-D-glucosamine 1-phosphate: step 1/1. The protein operates within bacterial outer membrane biogenesis; LPS lipid A biosynthesis. Catalyzes the last two sequential reactions in the de novo biosynthetic pathway for UDP-N-acetylglucosamine (UDP-GlcNAc). The C-terminal domain catalyzes the transfer of acetyl group from acetyl coenzyme A to glucosamine-1-phosphate (GlcN-1-P) to produce N-acetylglucosamine-1-phosphate (GlcNAc-1-P), which is converted into UDP-GlcNAc by the transfer of uridine 5-monophosphate (from uridine 5-triphosphate), a reaction catalyzed by the N-terminal domain. This chain is Bifunctional protein GlmU, found in Actinobacillus succinogenes (strain ATCC 55618 / DSM 22257 / CCUG 43843 / 130Z).